The primary structure comprises 274 residues: Mitochondrial outer membrane protein porin 3 (274 aa).

Residue serine 76 is modified to Phosphoserine.

It belongs to the eukaryotic mitochondrial porin (TC 1.B.8.1) family. As to quaternary structure, interacts with KIN14F/KP1. Interacts with FBA6 and GAPC1. Expressed in leaf tips, anthers and stigma.

The protein resides in the cell membrane. It localises to the mitochondrion outer membrane. Forms a channel through the mitochondrial outer membrane that allows diffusion of small hydrophilic molecules. The channel adopts an open conformation at low or zero membrane potential and a closed conformation at potentials above 30-40 mV. The open state has a weak anion selectivity whereas the closed state is cation-selective. The sequence is that of Mitochondrial outer membrane protein porin 3 (VDAC3) from Arabidopsis thaliana (Mouse-ear cress).